A 286-amino-acid polypeptide reads, in one-letter code: Bifunctional protein FolD (286 aa).

NADP(+)-binding positions include 165–167, serine 190, and valine 231; that span reads GRS.

This sequence belongs to the tetrahydrofolate dehydrogenase/cyclohydrolase family. As to quaternary structure, homodimer.

It catalyses the reaction (6R)-5,10-methylene-5,6,7,8-tetrahydrofolate + NADP(+) = (6R)-5,10-methenyltetrahydrofolate + NADPH. It carries out the reaction (6R)-5,10-methenyltetrahydrofolate + H2O = (6R)-10-formyltetrahydrofolate + H(+). It participates in one-carbon metabolism; tetrahydrofolate interconversion. In terms of biological role, catalyzes the oxidation of 5,10-methylenetetrahydrofolate to 5,10-methenyltetrahydrofolate and then the hydrolysis of 5,10-methenyltetrahydrofolate to 10-formyltetrahydrofolate. This Bacillus cereus (strain ATCC 10987 / NRS 248) protein is Bifunctional protein FolD.